We begin with the raw amino-acid sequence, 350 residues long: Pro-cathepsin H (350 aa).

Positions 1-19 are cleaved as a signal peptide; that stretch reads MAQWTLLIVFFCVATAAAG. A propeptide spans 20–113 (activation peptide); the sequence is LSFHDSNPIR…WEEFRSHRLG (94 aa). N117 carries N-linked (GlcNAc...) asparagine glycosylation. A propeptide spans 122–132 (removed in mature form); the sequence is LKGNHRITDVV. Intrachain disulfides connect C154-C197 and C188-C230. C157 is an active-site residue. N-linked (GlcNAc...) asparagine glycosylation occurs at N177. Residue N246 is glycosylated (N-linked (GlcNAc...) asparagine). C288 and C338 are joined by a disulfide. Residues H297 and N317 contribute to the active site.

The protein belongs to the peptidase C1 family. Interacts with KPI104 and KPI106. Composed of a mini chain and a large chain. The large chain may be split into heavy and light chain. All chains are held together by disulfide bonds.

It localises to the vacuole. Its subcellular location is the lysosome. It catalyses the reaction Hydrolysis of proteins, acting as an aminopeptidase (notably, cleaving Arg-|-Xaa bonds) as well as an endopeptidase.. May play a role in proteolysis leading to mobilization of nitrogen during senescence and starvation. In Medicago truncatula (Barrel medic), this protein is Pro-cathepsin H.